The sequence spans 409 residues: Methylthioribose-1-phosphate isomerase (409 aa).

The active-site Proton donor is the Asp-277.

It belongs to the eIF-2B alpha/beta/delta subunits family. MtnA subfamily.

Its subcellular location is the cytoplasm. The protein localises to the nucleus. It carries out the reaction 5-(methylsulfanyl)-alpha-D-ribose 1-phosphate = 5-(methylsulfanyl)-D-ribulose 1-phosphate. It functions in the pathway amino-acid biosynthesis; L-methionine biosynthesis via salvage pathway; L-methionine from S-methyl-5-thio-alpha-D-ribose 1-phosphate: step 1/6. Its function is as follows. Catalyzes the interconversion of methylthioribose-1-phosphate (MTR-1-P) into methylthioribulose-1-phosphate (MTRu-1-P). The polypeptide is Methylthioribose-1-phosphate isomerase (Scheffersomyces stipitis (strain ATCC 58785 / CBS 6054 / NBRC 10063 / NRRL Y-11545) (Yeast)).